We begin with the raw amino-acid sequence, 171 residues long: Der GTPase-activating protein YihI (171 aa).

2 disordered regions span residues M1–E99 and G145–N171. A compositionally biased stretch (basic and acidic residues) spans T20–D30. Over residues H40–S59 the composition is skewed to low complexity. Positions Y148–Q160 are enriched in acidic residues.

The protein belongs to the YihI family. As to quaternary structure, interacts with Der.

In terms of biological role, a GTPase-activating protein (GAP) that modifies Der/EngA GTPase function. May play a role in ribosome biogenesis. The sequence is that of Der GTPase-activating protein YihI from Enterobacter sp. (strain 638).